Here is a 720-residue protein sequence, read N- to C-terminus: Photosystem I P700 chlorophyll a apoprotein A1 (720 aa).

Helical transmembrane passes span 61 to 84 (VFSA…FHGA), 147 to 170 (LYCT…FHYH), 186 to 210 (LNHH…HVSL), 282 to 300 (TAHH…GHMY), 337 to 360 (WHAQ…HHMY), 376 to 402 (LSLF…IFMV), 424 to 446 (AIVS…LYIH), and 522 to 540 (FLVH…LILL). 2 residues coordinate [4Fe-4S] cluster: Cys-564 and Cys-573. 2 helical membrane-spanning segments follow: residues 580–601 (HVFL…HFSW) and 655–677 (LSAY…MFLF). His-666 serves as a coordination point for chlorophyll a'. Chlorophyll a-binding residues include Met-674 and Tyr-682. Trp-683 provides a ligand contact to phylloquinone. A helical transmembrane segment spans residues 715–720 (AVGVAH).

This sequence belongs to the PsaA/PsaB family. In terms of assembly, the PsaA/B heterodimer binds the P700 chlorophyll special pair and subsequent electron acceptors. PSI consists of a core antenna complex that captures photons, and an electron transfer chain that converts photonic excitation into a charge separation. The eukaryotic PSI reaction center is composed of at least 11 subunits. The cofactor is P700 is a chlorophyll a/chlorophyll a' dimer, A0 is one or more chlorophyll a, A1 is one or both phylloquinones and FX is a shared 4Fe-4S iron-sulfur center..

Its subcellular location is the plastid. It localises to the chloroplast thylakoid membrane. It catalyses the reaction reduced [plastocyanin] + hnu + oxidized [2Fe-2S]-[ferredoxin] = oxidized [plastocyanin] + reduced [2Fe-2S]-[ferredoxin]. PsaA and PsaB bind P700, the primary electron donor of photosystem I (PSI), as well as the electron acceptors A0, A1 and FX. PSI is a plastocyanin-ferredoxin oxidoreductase, converting photonic excitation into a charge separation, which transfers an electron from the donor P700 chlorophyll pair to the spectroscopically characterized acceptors A0, A1, FX, FA and FB in turn. Oxidized P700 is reduced on the lumenal side of the thylakoid membrane by plastocyanin. This is Photosystem I P700 chlorophyll a apoprotein A1 from Sequoia sempervirens (California redwood).